A 39-amino-acid chain; its full sequence is Potassium channel toxin alpha-KTx 31.1 (39 aa).

3 disulfide bridges follow: Cys-7–Cys-30, Cys-13–Cys-35, and Cys-17–Cys-37.

This sequence belongs to the short scorpion toxin superfamily. Potassium channel inhibitor family. Alpha-KTx 31 subfamily. In terms of tissue distribution, expressed by the venom gland.

Its subcellular location is the secreted. Its function is as follows. Voltage-gated potassium channel inhibitor. 1 uM of the native toxin inhibits rat Kv1.2/KCNA2 (100% inhibition), and drosophila Shaker IR/Sh (100%), human Kv1.3/KCNA3 (83%), rat Kv1.1/KCNA1 (32%) and rat Kv1.6/KCNA6 (21%). The protein is Potassium channel toxin alpha-KTx 31.1 of Buthus occitanus tunetanus (Common European scorpion).